A 521-amino-acid chain; its full sequence is Medium/long-chain-fatty-acid--[acyl-carrier-protein] ligase MbtM (521 aa).

Belongs to the ATP-dependent AMP-binding enzyme family.

It catalyses the reaction a long-chain fatty acid + holo-[ACP] + ATP = a long-chain fatty acyl-[ACP] + AMP + diphosphate. It carries out the reaction a medium-chain fatty acid + holo-[ACP] + ATP = a medium-chain fatty acyl-[ACP] + AMP + diphosphate. Its pathway is siderophore biosynthesis; mycobactin biosynthesis. In terms of biological role, activates lipidic moieties required for mycobactin biosynthesis. Converts medium- to long-chain aliphatic fatty acids into acyl adenylate, which is further transferred on to the phosphopantetheine arm of the carrier protein MbtL. In Mycobacterium tuberculosis (strain CDC 1551 / Oshkosh), this protein is Medium/long-chain-fatty-acid--[acyl-carrier-protein] ligase MbtM (mbtM).